Here is a 597-residue protein sequence, read N- to C-terminus: Arginine--tRNA ligase (597 aa).

The 'HIGH' region motif lies at 138–148 (ANPTGPMHVGH).

Belongs to the class-I aminoacyl-tRNA synthetase family. In terms of assembly, monomer.

Its subcellular location is the cytoplasm. It carries out the reaction tRNA(Arg) + L-arginine + ATP = L-arginyl-tRNA(Arg) + AMP + diphosphate. The polypeptide is Arginine--tRNA ligase (Rhodopseudomonas palustris (strain ATCC BAA-98 / CGA009)).